Here is a 296-residue protein sequence, read N- to C-terminus: Cytidine deaminase (296 aa).

CMP/dCMP-type deaminase domains lie at 47 to 167 and 186 to 296; these read TEAE…FGPK and DSSD…VDPV. Residue 88-90 coordinates substrate; sequence NLE. A Zn(2+)-binding site is contributed by histidine 101. Glutamate 103 serves as the catalytic Proton donor. The Zn(2+) site is built by cysteine 128 and cysteine 131.

The protein belongs to the cytidine and deoxycytidylate deaminase family. Homodimer. Zn(2+) is required as a cofactor.

The enzyme catalyses cytidine + H2O + H(+) = uridine + NH4(+). It carries out the reaction 2'-deoxycytidine + H2O + H(+) = 2'-deoxyuridine + NH4(+). Functionally, this enzyme scavenges exogenous and endogenous cytidine and 2'-deoxycytidine for UMP synthesis. This Shewanella sp. (strain MR-7) protein is Cytidine deaminase.